Consider the following 210-residue polypeptide: Chaperone protein TorD (210 aa).

This sequence belongs to the TorD/DmsD family. TorD subfamily.

It localises to the cytoplasm. In terms of biological role, involved in the biogenesis of TorA. Acts on TorA before the insertion of the molybdenum cofactor and, as a result, probably favors a conformation of the apoenzyme that is competent for acquiring the cofactor. The protein is Chaperone protein TorD of Salmonella newport (strain SL254).